We begin with the raw amino-acid sequence, 349 residues long: Ribosomal RNA small subunit methyltransferase H 1 (349 aa).

Residues Gly79–His81, Asp99, Phe129, Asp148, and Gln155 each bind S-adenosyl-L-methionine.

Belongs to the methyltransferase superfamily. RsmH family.

It localises to the cytoplasm. The catalysed reaction is cytidine(1402) in 16S rRNA + S-adenosyl-L-methionine = N(4)-methylcytidine(1402) in 16S rRNA + S-adenosyl-L-homocysteine + H(+). Functionally, specifically methylates the N4 position of cytidine in position 1402 (C1402) of 16S rRNA. The polypeptide is Ribosomal RNA small subunit methyltransferase H 1 (Agathobacter rectalis (strain ATCC 33656 / DSM 3377 / JCM 17463 / KCTC 5835 / VPI 0990) (Eubacterium rectale)).